A 356-amino-acid polypeptide reads, in one-letter code: Protein U8 (356 aa).

This sequence belongs to the herpesviridae US22 family.

The chain is Protein U8 (U8) from Homo sapiens (Human).